The primary structure comprises 360 residues: Phospho-N-acetylmuramoyl-pentapeptide-transferase (360 aa).

10 consecutive transmembrane segments (helical) span residues 25 to 45 (RGILGVLTALSLALWLGPWMI), 73 to 93 (TMGGALILSAIAVSTLLWADL), 97 to 117 (YVWVVLIVTLAFGAIGWVDDY), 134 to 154 (YFWQSVFGLAAAVFLYKTAPT), 168 to 188 (VTIPLGVGFVVLTYFVIVGSS), 199 to 219 (GLAIMPTVMVGGALGIFCYLS), 236 to 256 (SGELIVFCGALIGAGLGFLWF), 263 to 283 (VFMGDVGALALGAALGTIAVI), 288 to 308 (IVLFIMGGIFVVETLSVVIQV), and 338 to 358 (VIVRFWIITVILVLIGLATLK).

Belongs to the glycosyltransferase 4 family. MraY subfamily. Requires Mg(2+) as cofactor.

It is found in the cell inner membrane. It carries out the reaction UDP-N-acetyl-alpha-D-muramoyl-L-alanyl-gamma-D-glutamyl-meso-2,6-diaminopimeloyl-D-alanyl-D-alanine + di-trans,octa-cis-undecaprenyl phosphate = di-trans,octa-cis-undecaprenyl diphospho-N-acetyl-alpha-D-muramoyl-L-alanyl-D-glutamyl-meso-2,6-diaminopimeloyl-D-alanyl-D-alanine + UMP. Its pathway is cell wall biogenesis; peptidoglycan biosynthesis. Catalyzes the initial step of the lipid cycle reactions in the biosynthesis of the cell wall peptidoglycan: transfers peptidoglycan precursor phospho-MurNAc-pentapeptide from UDP-MurNAc-pentapeptide onto the lipid carrier undecaprenyl phosphate, yielding undecaprenyl-pyrophosphoryl-MurNAc-pentapeptide, known as lipid I. This Pseudomonas putida (strain ATCC 700007 / DSM 6899 / JCM 31910 / BCRC 17059 / LMG 24140 / F1) protein is Phospho-N-acetylmuramoyl-pentapeptide-transferase.